The chain runs to 379 residues: L-lactate dehydrogenase (379 aa).

Residues 1–379 (MIISASTDYR…ITSDLLVKER (379 aa)) form the FMN hydroxy acid dehydrogenase domain. Substrate is bound at residue Y24. FMN contacts are provided by S106 and Q127. A substrate-binding site is contributed by Y129. T155 lines the FMN pocket. R164 contributes to the substrate binding site. K251 is an FMN binding site. The active-site Proton acceptor is H275. Position 278 (R278) interacts with substrate. 306–330 (DSGIRTGLDVVRMLALGADTVLLGR) is a binding site for FMN.

It belongs to the FMN-dependent alpha-hydroxy acid dehydrogenase family. Homotetramer. The cofactor is FMN.

The protein localises to the cell inner membrane. It catalyses the reaction (S)-lactate + A = pyruvate + AH2. In terms of biological role, catalyzes the conversion of L-lactate to pyruvate. Is coupled to the respiratory chain. The chain is L-lactate dehydrogenase from Ectopseudomonas mendocina (strain ymp) (Pseudomonas mendocina).